The sequence spans 1199 residues: DNA-directed RNA polymerase subunit beta' (1199 aa).

4 residues coordinate Zn(2+): cysteine 60, cysteine 62, cysteine 75, and cysteine 78. Residues aspartate 449, aspartate 451, and aspartate 453 each contribute to the Mg(2+) site. Zn(2+) contacts are provided by cysteine 818, cysteine 892, cysteine 899, and cysteine 902.

Belongs to the RNA polymerase beta' chain family. As to quaternary structure, the RNAP catalytic core consists of 2 alpha, 1 beta, 1 beta' and 1 omega subunit. When a sigma factor is associated with the core the holoenzyme is formed, which can initiate transcription. Requires Mg(2+) as cofactor. Zn(2+) serves as cofactor.

It carries out the reaction RNA(n) + a ribonucleoside 5'-triphosphate = RNA(n+1) + diphosphate. Its function is as follows. DNA-dependent RNA polymerase catalyzes the transcription of DNA into RNA using the four ribonucleoside triphosphates as substrates. The polypeptide is DNA-directed RNA polymerase subunit beta' (Bacillus pumilus (strain SAFR-032)).